Here is a 102-residue protein sequence, read N- to C-terminus: Small ribosomal subunit protein uS10 (102 aa).

Belongs to the universal ribosomal protein uS10 family. In terms of assembly, part of the 30S ribosomal subunit.

In terms of biological role, involved in the binding of tRNA to the ribosomes. This Lactobacillus delbrueckii subsp. bulgaricus (strain ATCC 11842 / DSM 20081 / BCRC 10696 / JCM 1002 / NBRC 13953 / NCIMB 11778 / NCTC 12712 / WDCM 00102 / Lb 14) protein is Small ribosomal subunit protein uS10.